We begin with the raw amino-acid sequence, 752 residues long: Zinc finger protein 184 (752 aa).

The KRAB domain occupies 28-99 (VTFKDVIVDF…EPSIPVGTPG (72 aa)). Phosphoserine occurs at positions 117, 122, and 200. Residue lysine 207 forms a Glycyl lysine isopeptide (Lys-Gly) (interchain with G-Cter in SUMO2) linkage. 19 consecutive C2H2-type zinc fingers follow at residues 223–245 (CKCN…QRTH), 251–273 (YKCN…QRIH), 279–301 (YKCD…QRIH), 307–329 (YKCD…QRIH), 335–357 (YTCN…QKIH), 363–385 (FKCD…QKIH), 391–413 (YKCN…HMIH), 419–441 (YECN…QKTH), 447–469 (YDCA…LKIH), 475–497 (YKCN…RRIH), 503–525 (FECS…QKTH), 531–553 (YECK…ERIH), 559–581 (YQCH…RKIH), 587–609 (YKCN…KRIH), 615–637 (YECA…QKTH), 643–665 (YHCN…QRIH), 671–693 (YKCN…QNTH), 699–721 (YNCN…QRIH), and 727–749 (FGCN…QRLH).

This sequence belongs to the krueppel C2H2-type zinc-finger protein family.

It localises to the nucleus. May be involved in transcriptional regulation. The chain is Zinc finger protein 184 (ZNF184) from Bos taurus (Bovine).